Here is a 131-residue protein sequence, read N- to C-terminus: Structural protein ORF131 (131 aa).

It belongs to the viral ORF131/RIP family.

The protein localises to the virion. The chain is Structural protein ORF131 from Acidianus convivator (ATV).